The primary structure comprises 209 residues: Thiamine-phosphate synthase (209 aa).

4-amino-2-methyl-5-(diphosphooxymethyl)pyrimidine-binding positions include 36-40 and N68; that span reads QYRDK. Mg(2+) is bound by residues D69 and D87. 4-amino-2-methyl-5-(diphosphooxymethyl)pyrimidine is bound at residue T106. 133–135 lines the 2-[(2R,5Z)-2-carboxy-4-methylthiazol-5(2H)-ylidene]ethyl phosphate pocket; that stretch reads SST. A 4-amino-2-methyl-5-(diphosphooxymethyl)pyrimidine-binding site is contributed by K136. A 2-[(2R,5Z)-2-carboxy-4-methylthiazol-5(2H)-ylidene]ethyl phosphate-binding site is contributed by G163.

The protein belongs to the thiamine-phosphate synthase family. It depends on Mg(2+) as a cofactor.

It carries out the reaction 2-[(2R,5Z)-2-carboxy-4-methylthiazol-5(2H)-ylidene]ethyl phosphate + 4-amino-2-methyl-5-(diphosphooxymethyl)pyrimidine + 2 H(+) = thiamine phosphate + CO2 + diphosphate. The catalysed reaction is 2-(2-carboxy-4-methylthiazol-5-yl)ethyl phosphate + 4-amino-2-methyl-5-(diphosphooxymethyl)pyrimidine + 2 H(+) = thiamine phosphate + CO2 + diphosphate. It catalyses the reaction 4-methyl-5-(2-phosphooxyethyl)-thiazole + 4-amino-2-methyl-5-(diphosphooxymethyl)pyrimidine + H(+) = thiamine phosphate + diphosphate. The protein operates within cofactor biosynthesis; thiamine diphosphate biosynthesis; thiamine phosphate from 4-amino-2-methyl-5-diphosphomethylpyrimidine and 4-methyl-5-(2-phosphoethyl)-thiazole: step 1/1. Functionally, condenses 4-methyl-5-(beta-hydroxyethyl)thiazole monophosphate (THZ-P) and 2-methyl-4-amino-5-hydroxymethyl pyrimidine pyrophosphate (HMP-PP) to form thiamine monophosphate (TMP). This chain is Thiamine-phosphate synthase, found in Pseudomonas aeruginosa (strain LESB58).